We begin with the raw amino-acid sequence, 349 residues long: Meiotic recombination protein DMC1 homolog (349 aa).

Residue 138–145 participates in ATP binding; sequence GEFRSGKT. R240 provides a ligand contact to dsDNA. Residues R240, F243, R246, R252, and R320 each contribute to the ssDNA site. Positions 246 and 252 each coordinate dsDNA.

Belongs to the RecA family. DMC1 subfamily. As to quaternary structure, double stacked ring-shaped homooctamer.

It localises to the nucleus. May participate in meiotic recombination. The chain is Meiotic recombination protein DMC1 homolog (LIM15) from Lilium longiflorum (Trumpet lily).